A 646-amino-acid chain; its full sequence is RNase E specificity factor CsrD (646 aa).

Helical transmembrane passes span F10–F30 and M135–V155. An HAMP-like region spans residues F152 to L219. Positions R194 to A224 form a coiled coil. Positions T254–D387 constitute a GGDEF domain. Residues N396 to Y644 enclose the EAL domain.

It localises to the cell membrane. Its function is as follows. Serves as a specificity factor required for RNase E-mediated decay of the small global regulatory RNAs CsrB and CsrC, it is probably not a nuclease. Nor does its activity involve c-di-GMP, despite its domain composition. Positively modulates motility gene expression, is also required for curli expression. In Escherichia coli (strain K12), this protein is RNase E specificity factor CsrD (csrD).